Reading from the N-terminus, the 713-residue chain is Protein argonaute (713 aa).

The interval 18-129 (EFIPKEVHFY…IKNIRKHKVV (112 aa)) is N-terminal domain. Positions 164-257 (HLWDFVNRDK…FAPQFCNLVF (94 aa)) constitute a PAZ domain. The binds 3'-end of gDNA stretch occupies residues 213–218 (HIIKYY). The tract at residues 346 to 488 (DVPEIIRNKN…QIMGKLGIKY (143 aa)) is mid domain. Positions 426 to 699 (CFALIIGKEK…FVKALGKNWK (274 aa)) constitute a Piwi domain. 3 residues coordinate a divalent metal cation: glutamine 457, glutamine 479, and lysine 483. The tract at residues 457–460 (QNIL) is binds 5'-phosphorylated end of gDNA. Residues aspartate 504, glutamate 541, and aspartate 570 contribute to the active site. Aspartate 504 serves as a coordination point for Mn(2+). Aspartate 570 is a binding site for Mn(2+). Binds 5'-phosphorylated end of gDNA stretches follow at residues 625–632 (HKTPFGSN) and 678–679 (LR). Aspartate 688 is an active-site residue. Residues aspartate 688 and isoleucine 713 each contribute to the Mn(2+) site.

The protein belongs to the argonaute family. Long pAgo subfamily. The cofactor is a divalent metal cation.

Its activity is regulated as follows. DNA cleavage is inhibited by EDTA. Its function is as follows. A DNA-guided ssDNA endonuclease that may play a role in defense against invading genetic elements. Uses short ssDNA sequences as guides (gDNA) to bind complementary target strands, resulting in slicing of the target DNA (tDNA). Endonucleolytically cleaves tDNA (the gDNA indicates where to cleave); two major and two minor products are seen which correspond to cleavage sites between nucleotides 9/10, 10/11, 13/14, and 14/15 downstream of the target residue base-paired with the 5'-end of the gDNA. Efficient guide-dependent tDNA cleavage requires a minimal length of 15 bp and is maximal at 19 bp. Prefers gDNA with 5'-phosphorylated purines and 3'-pyrimidines; changing these bases alters the cleavage activity and patterns. Also has guide-independent activity on tDNA called 'chopping'. Probably a first round of guide-independent activity on an invading plasmid or virus would generate guide DNAs for subsequent, more efficient, guide-dependent degradation of invading nucleic acids. Has no activity on substrate with a mismatch at positions 10 and 11, on ssDNA or RNA, nor on DNA:RNA hybrids. Digests longer (750 bp) dsDNA as well as circular plasmid and naked genomic DNA, but not chromatin, in a guide DNA-independent manner. Addition of endogenous histone A3 protects DNA from cleavage, while cleavage is insensitive to methylation. When plasmid encoding active or mutated protein (Ala-541) is transformed into Sulfolobus acidocaldarius about 25-fold fewer transformants are found with active protein; reduced levels of plasmid are found in wild-type transformed cells. While S.acidocaldarius grows at a similar temperature to M.jannaschii (70 to 80 degrees Celsius) it has very different histone-like proteins, which presumably do not protect against MjAgo. Binds ssDNA, dsDNA and DNA-RNA hybrids; binding is most efficient with dsDNA. This chain is Protein argonaute, found in Methanocaldococcus jannaschii (strain ATCC 43067 / DSM 2661 / JAL-1 / JCM 10045 / NBRC 100440) (Methanococcus jannaschii).